The sequence spans 340 residues: Glycerol-3-phosphate dehydrogenase [NAD(P)+] (340 aa).

Residues S11, W12, R33, and K106 each contribute to the NADPH site. Sn-glycerol 3-phosphate is bound by residues K106, G137, and S139. A141 provides a ligand contact to NADPH. Sn-glycerol 3-phosphate-binding residues include K192, D245, S255, R256, and N257. K192 (proton acceptor) is an active-site residue. R256 contacts NADPH. Residues V280 and E282 each coordinate NADPH.

It belongs to the NAD-dependent glycerol-3-phosphate dehydrogenase family.

It localises to the cytoplasm. It catalyses the reaction sn-glycerol 3-phosphate + NAD(+) = dihydroxyacetone phosphate + NADH + H(+). The catalysed reaction is sn-glycerol 3-phosphate + NADP(+) = dihydroxyacetone phosphate + NADPH + H(+). It participates in membrane lipid metabolism; glycerophospholipid metabolism. Functionally, catalyzes the reduction of the glycolytic intermediate dihydroxyacetone phosphate (DHAP) to sn-glycerol 3-phosphate (G3P), the key precursor for phospholipid synthesis. The sequence is that of Glycerol-3-phosphate dehydrogenase [NAD(P)+] from Bacillus mycoides (strain KBAB4) (Bacillus weihenstephanensis).